We begin with the raw amino-acid sequence, 957 residues long: Thioredoxin domain-containing protein 11 (957 aa).

A compositionally biased stretch (gly residues) spans 1–13 (MSECGGRGGGGGS). The segment at 1-47 (MSECGGRGGGGGSSSSSDDAEDEGGGGGPAGSGSLSPAPAASSEGRL) is disordered. The segment covering 32 to 44 (SGSLSPAPAASSE) has biased composition (low complexity). The chain crosses the membrane as a helical span at residues 64 to 84 (LLCGAVALGCALLLALKFTCS). Residues 91–213 (IPAKPPVSFF…IEKFVRRVMK (123 aa)) form the Thioredoxin 1 domain. Cystine bridges form between C441/C444 and C691/C694. A Thioredoxin 2 domain is found at 621-771 (LDPKQALMKF…LLRFILHHSD (151 aa)). Positions 785 to 889 (AECLQNEAVL…ADASETLLTE (105 aa)) form a coiled coil. Positions 904 to 925 (LEGRDGADDRVPPSKARSEHPE) are enriched in basic and acidic residues. The disordered stretch occupies residues 904 to 957 (LEGRDGADDRVPPSKARSEHPEPPGAPRLPASTPLPANISSTLASEGSPENRTD). Polar residues predominate over residues 941–951 (NISSTLASEGS).

Belongs to the protein disulfide isomerase family. As to quaternary structure, interacts with the cytoplasmic part of DUOX1 and DUOX2. Interacts with TPO and CYBA.

Its subcellular location is the endoplasmic reticulum membrane. In terms of biological role, may act as a redox regulator involved in DUOX proteins folding. The interaction with DUOX1 and DUOX2 suggest that it belongs to a multiprotein complex constituting the thyroid H(2)O(2) generating system. It is however not sufficient to assist DUOX1 and DUOX2 in H(2)O(2) generation. This is Thioredoxin domain-containing protein 11 (TXNDC11) from Bos taurus (Bovine).